The chain runs to 484 residues: mRNA decay activator protein ZFP36L2 (484 aa).

A phosphoserine mark is found at serine 57 and serine 127. The disordered stretch occupies residues 100-152; that stretch reads YGQLKEPSGGSGTALVTKESKFRDRSFSENGERSQHLLHLQQQQKGGSGSQIN. The segment covering 117-134 has biased composition (basic and acidic residues); sequence KESKFRDRSFSENGERSQ. An RNA-binding motif is present at residues 155 to 160; that stretch reads RYKTEL. 2 consecutive C3H1-type zinc fingers follow at residues 155 to 183 and 193 to 221; these read RYKTELCRPFEESGTCKYGEKCQFAHGFH and KYKTELCRTFHTIGFCPYGPRCHFIHNAD. The tract at residues 172 to 213 is RNA-binding; the sequence is YGEKCQFAHGFHELRSLTRHPKYKTELCRTFHTIGFCPYGPR. Disordered regions lie at residues 261-304 and 395-484; these read SLSF…SCSS and QQGL…ISDD. The segment covering 401–418 has biased composition (pro residues); the sequence is PAPPPAQPPAAPAPPSPP. A compositionally biased stretch (low complexity) spans 449–468; it reads YLSGSLSSGSLSGSESPSLD. Residues serine 480 and serine 482 each carry the phosphoserine; by RPS6KA1 modification.

In terms of assembly, associates with the cytoplasmic CCR4-NOT deadenylase to trigger ARE-containing mRNA deadenylation and decay processes. Interacts with CNOT7; this interaction is inhibited in response to phorbol 12-myristate 13-acetate (PMA) treatment in a p38 MAPK-dependent manner. Interacts with CNOT6L. Post-translationally, phosphorylated by RPS6KA1 at Ser-480 and Ser-482 upon phorbol 12-myristate 13-acetate (PMA) treatment; this phosphorylation results in dissociation of the CCR4-NOT-deadenylase complex and induces p38 MAPK-mediated stabilization of the low-density lipoprotein (LDL) receptor (LDLR) mRNA. Phosphorylation occurs during early preadipocyte differentiation. As to expression, expressed in preadipocytes and adipocytes (at protein level). Expressed at highest level in lymphoid tissues such as thymus, spleen, lung, uterus, ovary, small and large intestine, mammary gland, fat and bone marrow. Expressed at intermediate level in kidney, heart, adrenal, eye and fetal liver. Weakly expressed in brain, skeletal muscle and liver. Expressed through B lymphocyte development. Expressed in superior cervical ganglion (SCG) and dorsal root ganglion (DRG). Expressed in embryonic stem cells (ESCs). Expressed in oocytes.

The protein localises to the nucleus. It localises to the cytoplasm. Zinc-finger RNA-binding protein that destabilizes several cytoplasmic AU-rich element (ARE)-containing mRNA transcripts by promoting their poly(A) tail removal or deadenylation, and hence provide a mechanism for attenuating protein synthesis. Acts as a 3'-untranslated region (UTR) ARE mRNA-binding adapter protein to communicate signaling events to the mRNA decay machinery. Functions by recruiting the CCR4-NOT deadenylase complex and probably other components of the cytoplasmic RNA decay machinery to the bound ARE-containing mRNAs, and hence promotes ARE-mediated mRNA deadenylation and decay processes. Binds to 3'-UTR ARE of numerous mRNAs. Promotes ARE-containing mRNA decay of the low-density lipoprotein (LDL) receptor (LDLR) mRNA in response to phorbol 12-myristate 13-acetate (PMA) treatment in a p38 MAPK-dependent manner. Positively regulates early adipogenesis by promoting ARE-mediated mRNA decay of immediate early genes (IEGs). Plays a role in mature peripheral neuron integrity by promoting ARE-containing mRNA decay of the transcriptional repressor REST mRNA. Plays a role in ovulation and oocyte meiotic maturation by promoting ARE-mediated mRNA decay of the luteinizing hormone receptor LHCGR mRNA. Acts as a negative regulator of erythroid cell differentiation: promotes glucocorticoid-induced self-renewal of erythroid cells by binding mRNAs that are induced or highly expressed during terminal erythroid differentiation and promotes their degradation, preventing erythroid cell differentiation. In association with ZFP36L1 maintains quiescence on developing B lymphocytes by promoting ARE-mediated decay of several mRNAs encoding cell cycle regulators that help B cells progress through the cell cycle, and hence ensuring accurate variable-diversity-joining (VDJ) recombination process and functional immune cell formation. Together with ZFP36L1 is also necessary for thymocyte development and prevention of T-cell acute lymphoblastic leukemia (T-ALL) transformation by promoting ARE-mediated mRNA decay of the oncogenic transcription factor NOTCH1 mRNA. This Mus musculus (Mouse) protein is mRNA decay activator protein ZFP36L2.